Reading from the N-terminus, the 160-residue chain is Large ribosomal subunit protein uL22c (160 aa).

It belongs to the universal ribosomal protein uL22 family. In terms of assembly, part of the 50S ribosomal subunit.

It localises to the plastid. It is found in the chloroplast. Functionally, this protein binds specifically to 23S rRNA. In terms of biological role, the globular domain of the protein is located near the polypeptide exit tunnel on the outside of the subunit, while an extended beta-hairpin is found that lines the wall of the exit tunnel in the center of the 70S ribosome. The sequence is that of Large ribosomal subunit protein uL22c (rpl22) from Aethionema grandiflorum (Persian stone-cress).